Here is a 554-residue protein sequence, read N- to C-terminus: MPTINVNKVDLERLSNISLSDKMIEDRFPMMGVEVEEIFEEVDKSGKKQKMVQFSINPDRPDYLSVEGLARGFRGFMGITTGIQEFEVLPSDIKVTVEENKTRPYVAFALVKNVLMDELVLESMINLQEKLHWAIGRDRKKLAIGIHDFDKVKAPFTYKEIKGDEIKFVPLGYEDEEMTPREIIEKHEKGIKYAHLIQDDRFPIIVDVNGEVLSLPPIINGTLTKVTPTSKNLLIDITGTEKEAVEETLNIIVCALAERRGTIVSVNVNGKKYPDLTLKSRIISIESINKKLGLELNPGEIIQAVKKSGMDALYEDGNLIVKIPAYRNDILHNVDLKEEIAINYGYEKFEGKLPSVATTGSKDPVEKKCNAMSDLMIGLGFYEVMNLTLSNQDTLFEKMNLKVEEKDYIEVLKPASIEHRVLRTSILPLLLETLYINKHHSLPQKIFEIGDCVIIDENDTETDTKCKNIKKIAGAITHPLTNFNEIKSSTEALLREFFEDFEFENYEHPAFIPGRCAKIIKDGKEVGFFGEIHPEVILNFELEHPIVGFEITIE.

The region spanning 276 to 351 (LTLKSRIISI…INYGYEKFEG (76 aa)) is the B5 domain. 4 residues coordinate Mg(2+): Asp-329, Asp-335, Glu-338, and Glu-339.

Belongs to the phenylalanyl-tRNA synthetase beta subunit family. Type 2 subfamily. In terms of assembly, tetramer of two alpha and two beta subunits. The cofactor is Mg(2+).

The protein localises to the cytoplasm. The enzyme catalyses tRNA(Phe) + L-phenylalanine + ATP = L-phenylalanyl-tRNA(Phe) + AMP + diphosphate + H(+). The chain is Phenylalanine--tRNA ligase beta subunit from Methanococcus maripaludis (strain C7 / ATCC BAA-1331).